The sequence spans 161 residues: MPDELRAEKSFPSKPYDSLKNKSEFDRVYQKGFKKHNPFFSLFVLDLSKEPPKEKEGFKDPLSCRLKDKKTLYLLGLSVSKKVGNAVKRNLIKRRLRSLTLKHAALCQGLALVFVPRSDCYHLDFWALEKHFLEMLTSIKNYMNKALKGLKKGITHTYAKQ.

This sequence belongs to the RnpA family. Consists of a catalytic RNA component (M1 or rnpB) and a protein subunit.

It carries out the reaction Endonucleolytic cleavage of RNA, removing 5'-extranucleotides from tRNA precursor.. Functionally, RNaseP catalyzes the removal of the 5'-leader sequence from pre-tRNA to produce the mature 5'-terminus. It can also cleave other RNA substrates such as 4.5S RNA. The protein component plays an auxiliary but essential role in vivo by binding to the 5'-leader sequence and broadening the substrate specificity of the ribozyme. This Helicobacter pylori (strain Shi470) protein is Ribonuclease P protein component.